The sequence spans 305 residues: MSNQCKTIAHVLPVNNGQEIHVWETPPKENAPSKNSTILIASGFARRMDHFAGLAEYLSENGFHVFRYDSLHHVGLSSGSIDEFTMTTGKNSLCTVYHWLQTKGTQNIGLIAASLSARVAYEVISDLELSFLITAVGVVNLRDTLEKALGFDYLSLPINELPNDLDFEGHKLGSEVFVRDCFEHHWDTLDSTLDKVANTSVPLIAFTANNDDWVKQEEVYDMLAHIRSGHCKLYSLLGSSHDLGENLVVLRNFYQSVTKAAIAMDGGSLEIDVDFIEPDFEQLTIATVNERRLKAEIESRAPEMA.

Catalysis depends on charge relay system residues S114, D211, and H241.

This sequence belongs to the LuxD family.

It functions in the pathway lipid metabolism; fatty acid reduction for biolumincescence. In terms of biological role, acyl transferase is part of the fatty acid reductase system required for aldehyde biosynthesis; it produces fatty acids for the luminescent reaction. This chain is Acyl transferase, found in Vibrio campbellii (strain ATCC BAA-1116).